The chain runs to 176 residues: dCTP deaminase (176 aa).

DCTP contacts are provided by residues 102 to 107 and aspartate 118; that span reads RSTFAR. Glutamate 128 acts as the Proton donor/acceptor in catalysis. 3 residues coordinate dCTP: tyrosine 160, lysine 166, and glutamine 167.

Belongs to the dCTP deaminase family. Homotrimer.

The enzyme catalyses dCTP + H2O + H(+) = dUTP + NH4(+). It functions in the pathway pyrimidine metabolism; dUMP biosynthesis; dUMP from dCTP (dUTP route): step 1/2. Its function is as follows. Catalyzes the deamination of dCTP to dUTP. This is dCTP deaminase from Staphylothermus marinus (strain ATCC 43588 / DSM 3639 / JCM 9404 / F1).